Consider the following 389-residue polypeptide: S-adenosylmethionine synthase (389 aa).

His-17 is a binding site for ATP. A Mg(2+)-binding site is contributed by Asp-19. Glu-45 contributes to the K(+) binding site. L-methionine contacts are provided by Glu-58 and Gln-101. Residues Gln-101–Val-111 are flexible loop. Residues Asp-160–Lys-162, Arg-226–Phe-227, Asp-235, Arg-241–Lys-242, Ala-258, and Lys-262 each bind ATP. An L-methionine-binding site is contributed by Asp-235. Lys-266 contributes to the L-methionine binding site.

Belongs to the AdoMet synthase family. As to quaternary structure, homotetramer; dimer of dimers. Mg(2+) serves as cofactor. K(+) is required as a cofactor.

The protein resides in the cytoplasm. The catalysed reaction is L-methionine + ATP + H2O = S-adenosyl-L-methionine + phosphate + diphosphate. The protein operates within amino-acid biosynthesis; S-adenosyl-L-methionine biosynthesis; S-adenosyl-L-methionine from L-methionine: step 1/1. In terms of biological role, catalyzes the formation of S-adenosylmethionine (AdoMet) from methionine and ATP. The overall synthetic reaction is composed of two sequential steps, AdoMet formation and the subsequent tripolyphosphate hydrolysis which occurs prior to release of AdoMet from the enzyme. In Anaeromyxobacter sp. (strain Fw109-5), this protein is S-adenosylmethionine synthase.